The following is a 391-amino-acid chain: UPF0229 protein BCB4264_A0587 (391 aa).

A compositionally biased stretch (polar residues) spans 1 to 16 (MGEENQPNYTISQENW). Disordered stretches follow at residues 1-31 (MGEE…RHQE) and 80-117 (HVGQ…GDAA). The segment covering 21-31 (KGYDDQQRHQE) has biased composition (basic and acidic residues). The segment covering 98–115 (GSGGQKQKGPGKGQGAGD) has biased composition (gly residues).

The protein belongs to the UPF0229 family.

This Bacillus cereus (strain B4264) protein is UPF0229 protein BCB4264_A0587.